The following is a 323-amino-acid chain: Acetyl-coenzyme A carboxylase carboxyl transferase subunit alpha 1 (323 aa).

One can recognise a CoA carboxyltransferase C-terminal domain in the interval Arg-39 to Gln-293.

Belongs to the AccA family. As to quaternary structure, acetyl-CoA carboxylase is a heterohexamer composed of biotin carboxyl carrier protein (AccB), biotin carboxylase (AccC) and two subunits each of ACCase subunit alpha (AccA) and ACCase subunit beta (AccD).

It localises to the cytoplasm. It catalyses the reaction N(6)-carboxybiotinyl-L-lysyl-[protein] + acetyl-CoA = N(6)-biotinyl-L-lysyl-[protein] + malonyl-CoA. It functions in the pathway lipid metabolism; malonyl-CoA biosynthesis; malonyl-CoA from acetyl-CoA: step 1/1. Functionally, component of the acetyl coenzyme A carboxylase (ACC) complex. First, biotin carboxylase catalyzes the carboxylation of biotin on its carrier protein (BCCP) and then the CO(2) group is transferred by the carboxyltransferase to acetyl-CoA to form malonyl-CoA. In terms of biological role, does not confer resistance to the endogenous polyketide antibiotic thailandamide, does not confer resistance to thailandamide when expressed in S.typhimurium. In Burkholderia thailandensis (strain ATCC 700388 / DSM 13276 / CCUG 48851 / CIP 106301 / E264), this protein is Acetyl-coenzyme A carboxylase carboxyl transferase subunit alpha 1.